A 650-amino-acid polypeptide reads, in one-letter code: Chaperone protein DnaK (650 aa).

The residue at position 200 (Thr-200) is a Phosphothreonine; by autocatalysis. Positions 612-632 (GEGATAGAAAGAGAAGGQQAQ) are enriched in low complexity. The segment at 612-650 (GEGATAGAAAGAGAAGGQQAQPQDDNVVDAEFKEVNDKK) is disordered. Residues 641–650 (AEFKEVNDKK) show a composition bias toward basic and acidic residues.

Belongs to the heat shock protein 70 family.

In terms of biological role, acts as a chaperone. The protein is Chaperone protein DnaK of Cupriavidus necator (strain ATCC 17699 / DSM 428 / KCTC 22496 / NCIMB 10442 / H16 / Stanier 337) (Ralstonia eutropha).